Reading from the N-terminus, the 890-residue chain is DNA mismatch repair protein MutS (890 aa).

The span at 1 to 13 (MDKGINLQNDKEP) shows a compositional bias: basic and acidic residues. Positions 1–23 (MDKGINLQNDKEPSPMAEGNPAD) are disordered. 649–656 (GPNMGGKS) is a binding site for ATP.

This sequence belongs to the DNA mismatch repair MutS family.

Its function is as follows. This protein is involved in the repair of mismatches in DNA. It is possible that it carries out the mismatch recognition step. This protein has a weak ATPase activity. The protein is DNA mismatch repair protein MutS of Paracidovorax citrulli (strain AAC00-1) (Acidovorax citrulli).